Consider the following 417-residue polypeptide: MAEIKNYTLNFGPQHPAAHGVLRLVLELDGEVIQRADPHIGLLHRATEKLAESKTYIQSLPYMDRLDYVSMMSNEHAYCLAIEKLLGVDVPIRAQYIRVMFSEITRLLNHLMWLGAHGLDCGAMNMLIYCFREREVLFDMYEAVSGARMHAAYFRPGGVYRDLPESMSQYKVNKIRNAKAIDALNENRQGSLLDFIDDFVTKFPKLVDEYETLLTDNRIWKQRTVGVGVVSPERALNLGFTGPMLRGSGFAWDLRKQQPYEVYAQMDFDIPVGKTGDCYDRYLVRVAEMRQSNRIIKQCVDWLRVNSGPVITSNHKVAPPNRESMKSNMEELIHHFKLFTEGFHVPEGEAYAAVEHPKGEFGIYIVSDGANKPYRLKIRPPGFSHLAAMDEMSRGHMIADAVAVIGTMDIVFGEIDR.

The protein belongs to the complex I 49 kDa subunit family. NDH-1 is composed of 14 different subunits. Subunits NuoB, C, D, E, F, and G constitute the peripheral sector of the complex.

It is found in the cell inner membrane. The enzyme catalyses a quinone + NADH + 5 H(+)(in) = a quinol + NAD(+) + 4 H(+)(out). NDH-1 shuttles electrons from NADH, via FMN and iron-sulfur (Fe-S) centers, to quinones in the respiratory chain. The immediate electron acceptor for the enzyme in this species is believed to be ubiquinone. Couples the redox reaction to proton translocation (for every two electrons transferred, four hydrogen ions are translocated across the cytoplasmic membrane), and thus conserves the redox energy in a proton gradient. This is NADH-quinone oxidoreductase subunit D from Polaromonas naphthalenivorans (strain CJ2).